A 676-amino-acid polypeptide reads, in one-letter code: MIKSEEASDRSVMTMDQLGGYYHDPRAHPPFSHPHAHSHPHQHTHTGHPYRAGNLLTGGNYQAMGGGESPTELIDEKPNIGYMELKHYMDATPTATPVSAAQHYSLSALHSMGTPPASSSPIPPYGVLMTAHSAGSASPQSNSKTPTDLPQDLQYASSSTSTAKVQPLQVQLQPLNHQYASTIKYCSNNTILSANDYQLLTSQEQAGQQQPQQLPAQQLQHSPGGGYMSRISTSPSQVISNAHGMPVLNYSSSSSSPAKSLNGSESSPPSQNHLENKVSGSAVVGTGGSSQQDAPSTPDTTKKSGTRRPEKPALSYINMIGHAIKESPTGKLTLSEIYAYLQKSYEFFRGPYVGWKNSVRHNLSLNECFKKLPKGMGVGKPGKGNYWTIDENSAHLFEDEGSLRRRPRGYRSKIKVKPYAGHANGYYASGYGDAGMDNGNYYASPAFASYDYSAAGATGVSPAGGQGFADPWNAHAAHSGSSSVGVGMGVGPLPQYTNISCLAAGGNVNGSATTPPLAHSALGMAPSASSSSSPLGAAATLQSDYAPTASLVAAGYSYATSAGSLDNGLRSISLQQLPGLSSIQHAQAQAQAQAHHHHHQHHASHPSHSHQGHGSMHQNHGTSSTTPPPSQSGGSHGIDHSPIDRKPAYLPPISPPPMMVALNGGGGYYEGLKYAN.

5 disordered regions span residues 22–50, 131–160, 203–232, 249–312, and 583–651; these read YHDP…GHPY, AHSA…SSST, QEQA…SRIS, NYSS…PEKP, and IQHA…AYLP. The span at 34-48 shows a compositional bias: basic residues; sequence PHAHSHPHQHTHTGH. Positions 133–160 are enriched in polar residues; that stretch reads SAGSASPQSNSKTPTDLPQDLQYASSST. Over residues 203-220 the composition is skewed to low complexity; that stretch reads QEQAGQQQPQQLPAQQLQ. Residues 257-273 are compositionally biased toward polar residues; the sequence is PAKSLNGSESSPPSQNH. Residues 311–408 constitute a DNA-binding region (fork-head); sequence KPALSYINMI…DEGSLRRRPR (98 aa). A compositionally biased stretch (low complexity) spans 583-593; sequence IQHAQAQAQAQ. The segment covering 594 to 611 has biased composition (basic residues); that stretch reads AHHHHHQHHASHPSHSHQ. Residues 612 to 625 are compositionally biased toward low complexity; the sequence is GHGSMHQNHGTSST. A compositionally biased stretch (basic and acidic residues) spans 637 to 647; sequence GIDHSPIDRKP.

In terms of assembly, binds to DNA. In embryo, expressed in all types of visceral muscles and their progenitors (at protein level). In late stage 10 embryo, expressed in the caudal visceral mesoderm and trunk and hindgut visceral mesoderm progenitors.

It localises to the nucleus. Its function is as follows. Component of a regulatory network controlling visceral mesoderm development and midgut morphogenesis. Transcriptional regulator involved in the activation of a large number of genes in the visceral mesoderm including betaTub60D, dpp and Hand. Binds to and regulates a number of enhancers driving expression in the visceral mesoderm in a temporally and spatially restricted manner. Also to binds to enhancers cooperatively with activators, such as bap or HLH54F, to coregulate expression of shared target genes in the visceral mesoderm. Binds to the Ndg enhancer and drives expression of Ndg in the late visceral musculature. May be involved in the transcriptional regulation of wupA in the visceral mesoderm. Plays an indirect role in the later stages of salivary gland positioning. The chain is Forkhead box protein biniou (bin) from Drosophila melanogaster (Fruit fly).